We begin with the raw amino-acid sequence, 529 residues long: ATP synthase F(1) complex catalytic subunit beta, mitochondrial (529 aa).

The N-terminal 46 residues, 1–46 (MLSLVGRVASASASGALRGLSPSAALPQAQLLLRAAPAGVHPARDY), are a transit peptide targeting the mitochondrion. O-linked (GlcNAc) serine glycosylation is present at Ser-106. Residues Lys-124, Lys-133, and Lys-161 each carry the N6-acetyllysine; alternate modification. Residues Lys-124, Lys-133, and Lys-161 each carry the N6-succinyllysine; alternate modification. At Lys-198 the chain carries N6-acetyllysine. Residues Gly-209, Val-210, Gly-211, Lys-212, Thr-213, and Val-214 each coordinate ADP. Gly-209 provides a ligand contact to ATP. 5 residues coordinate phosphate: Gly-209, Val-210, Gly-211, Lys-212, and Thr-213. Gly-211, Lys-212, Thr-213, and Val-214 together coordinate ATP. Residue Thr-213 participates in Mg(2+) binding. Glu-238 provides a ligand contact to Mg(2+). ATP is bound at residue Arg-239. 2 positions are modified to N6-acetyllysine; alternate: Lys-259 and Lys-264. 2 positions are modified to N6-succinyllysine; alternate: Lys-259 and Lys-264. At Thr-312 the chain carries Phosphothreonine. Lys-426 bears the N6-acetyllysine mark. Phosphoserine is present on Ser-433. Lys-480 and Lys-485 each carry N6-acetyllysine. Lys-522 is modified (N6-acetyllysine; alternate). Position 522 is an N6-succinyllysine; alternate (Lys-522). Ser-529 bears the Phosphoserine mark.

It belongs to the ATPase alpha/beta chains family. As to quaternary structure, homotrimer. Component of the ATP synthase complex composed at least of ATP5F1A/subunit alpha, ATP5F1B/subunit beta, ATP5MC1/subunit c (homooctomer), MT-ATP6/subunit a, MT-ATP8/subunit 8, ATP5ME/subunit e, ATP5MF/subunit f, ATP5MG/subunit g, ATP5MK/subunit k, ATP5MJ/subunit j, ATP5F1C/subunit gamma, ATP5F1D/subunit delta, ATP5F1E/subunit epsilon, ATP5PF/subunit F6, ATP5PB/subunit b, ATP5PD/subunit d, ATP5PO/subunit OSCP. ATP synthase complex consists of a soluble F(1) head domain (subunits alpha(3) and beta(3)) - the catalytic core - and a membrane F(0) domain - the membrane proton channel (subunits c, a, 8, e, f, g, k and j). These two domains are linked by a central stalk (subunits gamma, delta, and epsilon) rotating inside the F1 region and a stationary peripheral stalk (subunits F6, b, d, and OSCP). Interacts with PPIF. Interacts with BCL2L1 isoform BCL-X(L); the interaction mediates the association of BCL2L1 isoform BCL-X(L) with the mitochondrial membrane F(1)F(0) ATP synthase and enhances neurons metabolic efficiency. Interacts with CLN5 and PPT1. Interacts with S100A1; this interaction increases F1-ATPase activity. Interacts with MTLN. Interacts with TTC5/STRAP; the interaction results in decreased mitochondrial ATP production. Acetylation of Lys-133 is observed in liver mitochondria from fasted mice but not from fed mice.

It localises to the mitochondrion inner membrane. It catalyses the reaction ATP + H2O + 4 H(+)(in) = ADP + phosphate + 5 H(+)(out). In terms of biological role, catalytic subunit beta, of the mitochondrial membrane ATP synthase complex (F(1)F(0) ATP synthase or Complex V) that produces ATP from ADP in the presence of a proton gradient across the membrane which is generated by electron transport complexes of the respiratory chain. ATP synthase complex consist of a soluble F(1) head domain - the catalytic core - and a membrane F(1) domain - the membrane proton channel. These two domains are linked by a central stalk rotating inside the F(1) region and a stationary peripheral stalk. During catalysis, ATP synthesis in the catalytic domain of F(1) is coupled via a rotary mechanism of the central stalk subunits to proton translocation. In vivo, can only synthesize ATP although its ATP hydrolase activity can be activated artificially in vitro. With the subunit alpha (ATP5F1A), forms the catalytic core in the F(1) domain. This chain is ATP synthase F(1) complex catalytic subunit beta, mitochondrial, found in Mus musculus (Mouse).